The sequence spans 101 residues: Small ribosomal subunit protein uS14 (101 aa).

Positions 44–74 (ASRKLSRLPRDSSPVRLRNRDQVDGRPRGYV) are disordered. Residues 61-70 (RNRDQVDGRP) are compositionally biased toward basic and acidic residues.

It belongs to the universal ribosomal protein uS14 family. As to quaternary structure, part of the 30S ribosomal subunit. Contacts proteins S3 and S10.

Functionally, binds 16S rRNA, required for the assembly of 30S particles and may also be responsible for determining the conformation of the 16S rRNA at the A site. This chain is Small ribosomal subunit protein uS14, found in Cutibacterium acnes (strain DSM 16379 / KPA171202) (Propionibacterium acnes).